The following is a 178-amino-acid chain: Ribulose bisphosphate carboxylase small subunit, chloroplastic 2 (178 aa).

A chloroplast-targeting transit peptide spans 1 to 54; sequence MASISSTVATVSRAAPAQANMVAPFTGLKSNVAFPATKKANDFSTLPSNGGRVQ.

It belongs to the RuBisCO small chain family. In terms of assembly, heterohexadecamer of 8 large and 8 small subunits.

Its subcellular location is the plastid. It localises to the chloroplast. In terms of biological role, ruBisCO catalyzes two reactions: the carboxylation of D-ribulose 1,5-bisphosphate, the primary event in carbon dioxide fixation, as well as the oxidative fragmentation of the pentose substrate. Both reactions occur simultaneously and in competition at the same active site. Although the small subunit is not catalytic it is essential for maximal activity. The protein is Ribulose bisphosphate carboxylase small subunit, chloroplastic 2 of Flaveria pringlei.